Reading from the N-terminus, the 605-residue chain is YTH domain-containing protein ECT4 (605 aa).

Disordered stretches follow at residues 249 to 274 (GVASSYSKANNNVPATRNQNSSSNSH) and 357 to 384 (ELNRGPRAKGTKATEEVSSEEVKKQTFD). Residues 256 to 274 (KANNNVPATRNQNSSSNSH) are compositionally biased toward polar residues. A compositionally biased stretch (basic and acidic residues) spans 368–383 (KATEEVSSEEVKKQTF). One can recognise a YTH domain in the interval 414 to 551 (AKFFIIKSYS…EQGLKVVKIF (138 aa)). RNA-binding positions include 420–422 (KSY), D426, 436–437 (WA), N469, W493, W498, and W506. The disordered stretch occupies residues 580–605 (KQQQSQKQVWEGKTNDEKPGTVDSTM).

As to expression, expressed in the shoot apex, at the sites of leaf formation, and in emerging leaves.

Its subcellular location is the cytoplasm. Specifically recognizes and binds N6-methyladenosine (m6A)-containing RNAs, and regulates mRNA stability. M6A is a modification present at internal sites of mRNAs and some non-coding RNAs and plays a role in mRNA stability and processing. Required for the correct timing of leaf formation and normal leaf morphology. The sequence is that of YTH domain-containing protein ECT4 from Arabidopsis thaliana (Mouse-ear cress).